We begin with the raw amino-acid sequence, 649 residues long: Protein WHI4 (649 aa).

A phosphoserine mark is found at serine 22 and serine 206. Disordered regions lie at residues 196-217 (EHVS…SSAQ) and 228-247 (ISYG…KPRP). Polar residues predominate over residues 228–238 (ISYGKTSSSPL). Serine 258 and serine 283 each carry phosphoserine. Disordered regions lie at residues 438–461 (LDLN…SIFN) and 604–649 (QLPH…YGKS). The 93-residue stretch at 533 to 625 (NTLYVGNLPP…GGIRLSFSKN (93 aa)) folds into the RRM domain. Over residues 631–649 (GSNSRSKSGYSFNGSYGKS) the composition is skewed to polar residues.

Post-translationally, phosphorylated by PKA in vitro.

Its subcellular location is the cytoplasm. In terms of biological role, has a partially redundant function to WHI3, a dosage-dependent modulator of cell size. The polypeptide is Protein WHI4 (WHI4) (Saccharomyces cerevisiae (strain ATCC 204508 / S288c) (Baker's yeast)).